A 259-amino-acid polypeptide reads, in one-letter code: DNA repair protein RecO (259 aa).

The protein belongs to the RecO family.

Its function is as follows. Involved in DNA repair and RecF pathway recombination. The protein is DNA repair protein RecO of Syntrophus aciditrophicus (strain SB).